Consider the following 196-residue polypeptide: Peroxisome assembly protein 22 (196 aa).

The helical transmembrane segment at 15 to 37 threads the bilayer; that stretch reads LWIAALVAASIVTISYKVYSSYI.

Belongs to the peroxin-22 family.

It localises to the peroxisome membrane. Involved in peroxisome biogenesis. This chain is Peroxisome assembly protein 22 (PEX22), found in Debaryomyces hansenii (strain ATCC 36239 / CBS 767 / BCRC 21394 / JCM 1990 / NBRC 0083 / IGC 2968) (Yeast).